Here is a 259-residue protein sequence, read N- to C-terminus: Global transcriptional regulator CodY (259 aa).

The GAF domain stretch occupies residues 1–155; the sequence is MDLLSKTRRI…GATVVGMEIL (155 aa). A DNA-binding region (H-T-H motif) is located at residues 203–222; sequence ASKIADRVGITRSVIVNALR.

It belongs to the CodY family.

It localises to the cytoplasm. DNA-binding global transcriptional regulator which is involved in the adaptive response to starvation and acts by directly or indirectly controlling the expression of numerous genes in response to nutrient availability. During rapid exponential growth, CodY is highly active and represses genes whose products allow adaptation to nutrient depletion. This Brevibacillus brevis (strain 47 / JCM 6285 / NBRC 100599) protein is Global transcriptional regulator CodY.